Reading from the N-terminus, the 286-residue chain is Non-homologous end joining protein Ku (286 aa).

The 166-residue stretch at 10–175 (TVGLVSFPVR…EEVREPDFVV (166 aa)) folds into the Ku domain. Basic and acidic residues predominate over residues 226-242 (ERQERQRREAGEVRQAD). Residues 226–270 (ERQERQRREAGEVRQADETDEAAETEVPEVDIPASRAPGETGGEL) form a disordered region. Acidic residues predominate over residues 243–254 (ETDEAAETEVPE).

Belongs to the prokaryotic Ku family. Homodimer. Interacts with LigD.

Functionally, with LigD forms a non-homologous end joining (NHEJ) DNA repair enzyme, which repairs dsDNA breaks with reduced fidelity. Binds linear dsDNA with 5'- and 3'- overhangs but not closed circular dsDNA nor ssDNA. Recruits and stimulates the ligase activity of LigD. The sequence is that of Non-homologous end joining protein Ku from Actinosynnema mirum (strain ATCC 29888 / DSM 43827 / JCM 3225 / NBRC 14064 / NCIMB 13271 / NRRL B-12336 / IMRU 3971 / 101).